The primary structure comprises 194 residues: tRNA (guanosine(18)-2'-O)-methyltransferase (194 aa).

S-adenosyl-L-methionine-binding positions include Thr-99, 122 to 126, Ile-142, and Leu-151; that span reads GAEKW.

Belongs to the class IV-like SAM-binding methyltransferase superfamily. RNA methyltransferase TrmH family. As to quaternary structure, monomer.

It catalyses the reaction guanosine(18) in tRNA + S-adenosyl-L-methionine = 2'-O-methylguanosine(18) in tRNA + S-adenosyl-L-homocysteine + H(+). Its activity is regulated as follows. Stimulated by magnesium ions and spermine. Inhibited by S-adenosyl-homocysteine. Catalyzes the 2'-O methylation of guanosine at position 18 in tRNA. The sequence is that of tRNA (guanosine(18)-2'-O)-methyltransferase from Thermus thermophilus (strain ATCC BAA-163 / DSM 7039 / HB27).